Reading from the N-terminus, the 591-residue chain is Probable LRR receptor-like serine/threonine-protein kinase At1g69990 (591 aa).

Residues 1–18 (MKTISIFFVIILMSSSHA) form the signal peptide. At 19-218 (EDDVLCLKGF…GKNLTIIVTA (200 aa)) the chain is on the extracellular side. N-linked (GlcNAc...) asparagine glycosylation is present at asparagine 46. LRR repeat units follow at residues 66-88 (RILSLQLQSMQLSGQIPESLKLC), 90-111 (SLQSLDLSFNDFSGLIPSQICS), 115-137 (YLVTLDLSGNKLSGSIPSQIVDC), 139-162 (FLNSLALNQNKLTGSIPSELTRLN), and 163-185 (RLQRLSLADNDLSGSIPSELSHY). The N-linked (GlcNAc...) asparagine glycan is linked to asparagine 211. The chain crosses the membrane as a helical span at residues 219 to 239 (GVIGAVGSLCVGFGMFWWFFI). The Cytoplasmic portion of the chain corresponds to 240-591 (RDRRKMNNYG…LIFNKQEHLK (352 aa)). Residue threonine 292 is modified to Phosphothreonine. The Protein kinase domain maps to 295 to 573 (FDSGNIVVSS…KNLGDQHGFF (279 aa)). ATP is bound by residues 301–309 (VVSSRSGVS) and lysine 323. Serine 378 carries the phosphoserine modification. Threonine 389 is modified (phosphothreonine). The residue at position 463 (tyrosine 463) is a Phosphotyrosine. A Phosphoserine modification is found at serine 465. The residue at position 466 (threonine 466) is a Phosphothreonine. The residue at position 470 (serine 470) is a Phosphoserine.

Belongs to the protein kinase superfamily. Ser/Thr protein kinase family.

The protein resides in the membrane. The catalysed reaction is L-seryl-[protein] + ATP = O-phospho-L-seryl-[protein] + ADP + H(+). It carries out the reaction L-threonyl-[protein] + ATP = O-phospho-L-threonyl-[protein] + ADP + H(+). The chain is Probable LRR receptor-like serine/threonine-protein kinase At1g69990 from Arabidopsis thaliana (Mouse-ear cress).